The primary structure comprises 255 residues: Type III pantothenate kinase (255 aa).

6–13 (DVGNTNTV) is a binding site for ATP. Substrate contacts are provided by residues Tyr-100 and 107–110 (GADR). Asp-109 acts as the Proton acceptor in catalysis. Position 129 (Asp-129) interacts with K(+). Thr-132 contributes to the ATP binding site. Residue Thr-184 participates in substrate binding.

It belongs to the type III pantothenate kinase family. Homodimer. The cofactor is NH4(+). It depends on K(+) as a cofactor.

The protein localises to the cytoplasm. The catalysed reaction is (R)-pantothenate + ATP = (R)-4'-phosphopantothenate + ADP + H(+). It participates in cofactor biosynthesis; coenzyme A biosynthesis; CoA from (R)-pantothenate: step 1/5. In terms of biological role, catalyzes the phosphorylation of pantothenate (Pan), the first step in CoA biosynthesis. The polypeptide is Type III pantothenate kinase (Syntrophomonas wolfei subsp. wolfei (strain DSM 2245B / Goettingen)).